We begin with the raw amino-acid sequence, 723 residues long: MAMFSHRLRRIVVAAPSYFQRFSTLSRPSDFTPVPSLLPRSVVKQSTAINRSPARLFSTTQYQYDPYTGEDSFMPDNEGCDFNHWLITMNFPKDNLPSREEMISIFEQTCAKGLAISLEEAKKKIYAICTTSYQGFQATMTIGEVEKFRDLPGVQYIIPDSYIDVENKVYGGDKYENGVITPGPVPVPTKEGFDSLKKESKPEQEEAEIILTPPDEGKTSGQVQGQGSLTLPDQRSVKERQGTLALVQGQGQRSGMSILGQGQGEGRRMSIPGQWQSRGQGNSFQGSFKQSQGTLPVRKGQTQISDEIPSFQGNVKQRQEMPIHGQGQAQRSQMPSSQGTLRQGQAQGSQRPSNQVGYNQGQGAQTPPYHQGQGAQTPPYQESPNNYGQGAFVQYNQGPPQGNVVQTTQEKYNQMGQGNYAPQSGGNYSPAQGAGSPRFGYGQGQGGQLLSPYRGNYNQGQGTPLPGQGQEGQPSYQMGFSQGLGAPVPPNQVIPGNYGQWAFVNYNQGPPQGNFLQGPQQNHNQGGQWNYSPQNGGHYGPAQFGQWYPGPPQGQGIQWPQYQLSYNQGQGTPFSGQCRCPNCGMTSYQGYNNQGQGTHIPEQWEGQDYAVLSYQASYNQAHGAQAPPYHGNYNQATPGGYGQGTSANFNQRFPVNPANYNMQNGGNYGPPHGLAGNPGFRQGFSGQGQNQTFQQDDQRNVAGDLRNNNPVDPTETRKPNSRI.

Residues 1-64 constitute a mitochondrion transit peptide; the sequence is MAMFSHRLRR…RLFSTTQYQY (64 aa). Disordered regions lie at residues 180–303, 318–474, and 663–723; these read ITPG…GQTQ, RQEM…EGQP, and QNGG…NSRI. Basic and acidic residues predominate over residues 191-204; sequence EGFDSLKKESKPEQ. Composition is skewed to polar residues over residues 219 to 233, 273 to 303, 327 to 365, and 373 to 430; these read TSGQ…TLPD, GQWQ…GQTQ, GQAQ…QGAQ, and QGAQ…NYSP. Low complexity-rich tracts occupy residues 459–474 and 682–695; these read QGQG…EGQP and QGFS…TFQQ. Residues 714–723 show a composition bias toward basic and acidic residues; it reads TETRKPNSRI.

It belongs to the MORF family. As to quaternary structure, heterodimers with MORF8/RIP1, MORF1/RIP8 and MORF3/RIP3.

Its subcellular location is the mitochondrion. Its function is as follows. Involved in organellar RNA editing. Required for the processing of few RNA editing site in mitochondria. This chain is Multiple organellar RNA editing factor 4, mitochondrial, found in Arabidopsis thaliana (Mouse-ear cress).